Consider the following 213-residue polypeptide: tRNA (guanine-N(7)-)-methyltransferase (213 aa).

The S-adenosyl-L-methionine site is built by glutamate 44, glutamate 69, asparagine 96, and aspartate 118. Aspartate 118 is an active-site residue. Lysine 122 provides a ligand contact to substrate. The interaction with RNA stretch occupies residues arginine 124–arginine 129. Substrate is bound by residues aspartate 154 and threonine 191–glutamate 194.

The protein belongs to the class I-like SAM-binding methyltransferase superfamily. TrmB family.

The catalysed reaction is guanosine(46) in tRNA + S-adenosyl-L-methionine = N(7)-methylguanosine(46) in tRNA + S-adenosyl-L-homocysteine. The protein operates within tRNA modification; N(7)-methylguanine-tRNA biosynthesis. Catalyzes the formation of N(7)-methylguanine at position 46 (m7G46) in tRNA. In Bacillus licheniformis (strain ATCC 14580 / DSM 13 / JCM 2505 / CCUG 7422 / NBRC 12200 / NCIMB 9375 / NCTC 10341 / NRRL NRS-1264 / Gibson 46), this protein is tRNA (guanine-N(7)-)-methyltransferase.